The following is a 349-amino-acid chain: 4-hydroxy-3-methylbut-2-en-1-yl diphosphate synthase (flavodoxin) (349 aa).

[4Fe-4S] cluster contacts are provided by cysteine 264, cysteine 267, cysteine 299, and glutamate 306.

Belongs to the IspG family. [4Fe-4S] cluster serves as cofactor.

It carries out the reaction (2E)-4-hydroxy-3-methylbut-2-enyl diphosphate + oxidized [flavodoxin] + H2O + 2 H(+) = 2-C-methyl-D-erythritol 2,4-cyclic diphosphate + reduced [flavodoxin]. Its pathway is isoprenoid biosynthesis; isopentenyl diphosphate biosynthesis via DXP pathway; isopentenyl diphosphate from 1-deoxy-D-xylulose 5-phosphate: step 5/6. Its function is as follows. Converts 2C-methyl-D-erythritol 2,4-cyclodiphosphate (ME-2,4cPP) into 1-hydroxy-2-methyl-2-(E)-butenyl 4-diphosphate. In Clostridium tetani (strain Massachusetts / E88), this protein is 4-hydroxy-3-methylbut-2-en-1-yl diphosphate synthase (flavodoxin).